Consider the following 136-residue polypeptide: ATP synthase epsilon chain 2 (136 aa).

It belongs to the ATPase epsilon chain family. In terms of assembly, F-type ATPases have 2 components, CF(1) - the catalytic core - and CF(0) - the membrane proton channel. CF(1) has five subunits: alpha(3), beta(3), gamma(1), delta(1), epsilon(1). CF(0) has three main subunits: a, b and c.

The protein resides in the cell inner membrane. Its function is as follows. Produces ATP from ADP in the presence of a proton gradient across the membrane. This chain is ATP synthase epsilon chain 2, found in Nitrobacter hamburgensis (strain DSM 10229 / NCIMB 13809 / X14).